We begin with the raw amino-acid sequence, 388 residues long: Acyl-CoA dehydrogenase fadE12 (388 aa).

It belongs to the acyl-CoA dehydrogenase family. It depends on FAD as a cofactor.

The catalysed reaction is a 2,3-saturated acyl-CoA + A = a 2,3-dehydroacyl-CoA + AH2. This chain is Acyl-CoA dehydrogenase fadE12 (fadE12), found in Mycobacterium tuberculosis (strain CDC 1551 / Oshkosh).